Here is a 92-residue protein sequence, read N- to C-terminus: Small ribosomal subunit protein uS19 (92 aa).

The protein belongs to the universal ribosomal protein uS19 family.

Its function is as follows. Protein S19 forms a complex with S13 that binds strongly to the 16S ribosomal RNA. This is Small ribosomal subunit protein uS19 from Acaryochloris marina (strain MBIC 11017).